Reading from the N-terminus, the 142-residue chain is MVLSAADKSNIQAAWGKVGGHAADYGAEALERMFLSFPTTKTYFPHFDLSHGSAQVKGHGAKVANALTKAVGHLDDLPGALSELSDLHAHKLRVDPVNFKLLSHSLLVTLASHLPNDFTPAVHASLDKFLASVSTVLTSKYR.

A Globin domain is found at 2–142 (VLSAADKSNI…VSTVLTSKYR (141 aa)). His59 contacts O2. Residue His88 coordinates heme b.

Belongs to the globin family. As to quaternary structure, heterotetramer of two alpha chains and two beta chains. In terms of tissue distribution, red blood cells.

Functionally, involved in oxygen transport from the lung to the various peripheral tissues. This chain is Hemoglobin subunit alpha-2, found in Bubalus bubalis (Domestic water buffalo).